We begin with the raw amino-acid sequence, 80 residues long: Exodeoxyribonuclease 7 small subunit (80 aa).

This sequence belongs to the XseB family. As to quaternary structure, heterooligomer composed of large and small subunits.

It localises to the cytoplasm. The catalysed reaction is Exonucleolytic cleavage in either 5'- to 3'- or 3'- to 5'-direction to yield nucleoside 5'-phosphates.. Its function is as follows. Bidirectionally degrades single-stranded DNA into large acid-insoluble oligonucleotides, which are then degraded further into small acid-soluble oligonucleotides. This chain is Exodeoxyribonuclease 7 small subunit, found in Enterobacter sp. (strain 638).